Consider the following 193-residue polypeptide: MKSLFRPLIVVFVVLVAVTGLAYPAVMTVFGQAVFPAQANGSLIEKGGRVVGSALIGQQFDAPQYFWGRLSATSPMPYNAAGSGGSNLGPLNPALKDQVKSRLDALKAAGTDLSQPVPVDLVTASASGLDPEISPAAADYQVARVARARKMADADVRRLVADHTSGRQFGVLGEPRVNVLKLNLALDAAQAAH.

The chain crosses the membrane as a helical span at residues 7-27; the sequence is PLIVVFVVLVAVTGLAYPAVM.

The protein belongs to the KdpC family. In terms of assembly, the system is composed of three essential subunits: KdpA, KdpB and KdpC.

It is found in the cell inner membrane. Part of the high-affinity ATP-driven potassium transport (or Kdp) system, which catalyzes the hydrolysis of ATP coupled with the electrogenic transport of potassium into the cytoplasm. This subunit acts as a catalytic chaperone that increases the ATP-binding affinity of the ATP-hydrolyzing subunit KdpB by the formation of a transient KdpB/KdpC/ATP ternary complex. The polypeptide is Potassium-transporting ATPase KdpC subunit (Burkholderia mallei (strain NCTC 10247)).